Here is a 480-residue protein sequence, read N- to C-terminus: Glutamate--tRNA ligase (480 aa).

Residues Pro9–Thr19 carry the 'HIGH' region motif. The short motif at Lys253 to Arg257 is the 'KMSKS' region element. ATP is bound at residue Lys256.

Belongs to the class-I aminoacyl-tRNA synthetase family. Glutamate--tRNA ligase type 1 subfamily. As to quaternary structure, monomer.

Its subcellular location is the cytoplasm. The enzyme catalyses tRNA(Glu) + L-glutamate + ATP = L-glutamyl-tRNA(Glu) + AMP + diphosphate. Catalyzes the attachment of glutamate to tRNA(Glu) in a two-step reaction: glutamate is first activated by ATP to form Glu-AMP and then transferred to the acceptor end of tRNA(Glu). The polypeptide is Glutamate--tRNA ligase (Deinococcus geothermalis (strain DSM 11300 / CIP 105573 / AG-3a)).